The following is a 198-amino-acid chain: Elongation factor Ts (198 aa).

The involved in Mg(2+) ion dislocation from EF-Tu stretch occupies residues 82–85; it reads SDFV.

The protein belongs to the EF-Ts family.

The protein resides in the cytoplasm. Functionally, associates with the EF-Tu.GDP complex and induces the exchange of GDP to GTP. It remains bound to the aminoacyl-tRNA.EF-Tu.GTP complex up to the GTP hydrolysis stage on the ribosome. The sequence is that of Elongation factor Ts from Desulfosudis oleivorans (strain DSM 6200 / JCM 39069 / Hxd3) (Desulfococcus oleovorans).